Here is a 218-residue protein sequence, read N- to C-terminus: MADSKAKPAKAANKTPPKSPGDPARAAKRLSLESEGANEGATAAPELSALEEAFRRFAVHGDTRATGKEMHGKNWSKLCKDCHVIDGKNVTVTDVDIVFSKIKGKSCRTITFEQFQEALEELAKKRFKDKSSEEAVREVHRLIEGRAPVISGVTKAVSSPTVSRLTDTSKFTGSHKERFDQSGKGKGKAGRVDLVDESGYVPGYKHAGTYDQKVQGGK.

The tract at residues 1 to 46 (MADSKAKPAKAANKTPPKSPGDPARAAKRLSLESEGANEGATAAPE) is disordered. The mediates interaction with LIMK1 stretch occupies residues 1-115 (MADSKAKPAK…SCRTITFEQF (115 aa)). T15 is subject to Phosphothreonine. Phosphoserine occurs at positions 19, 31, and 34. T42 bears the Phosphothreonine mark. Residues H60, H71, C79, and C82 each coordinate Zn(2+). Position 91 is a phosphothreonine (T91). S106 carries the post-translational modification Phosphoserine. S151 carries O-linked (GlcNAc) serine glycosylation. Phosphoserine is present on residues S158 and S159. A disordered region spans residues 166-192 (TDTSKFTGSHKERFDQSGKGKGKAGRV). Basic and acidic residues predominate over residues 174–183 (SHKERFDQSG).

Belongs to the TPPP family. As to quaternary structure, homodimer. Binds tubulin; binding is inhibited by GTP. Interacts with MAPK1. Interacts with GAPDH; the interaction is direct. Interacts with LIMK1 (via the PDZ domain); the interaction is direct. Interacts with LIMK2. Interacts with HDAC6; thereby inhibiting the tubulin deacetylase activity of HDAC6. Interacts with aggregated SNCA; may have a pro-aggregatory role in synucleinopathies. Interacts with DYNLL1. Interacts (via C-terminus) with S100A2, S100A6 and S100B; these interactions inhibit TPPP dimerization. It depends on Mg(2+) as a cofactor. Phosphorylated by LIMK1 on serine residues; phosphorylation may alter the tubulin polymerization activity. Phosphorylation by LIMK2, but not LIMK1, regulates astral microtubule organization at early stage of mitosis. Phosphorylation by ROCK1 at Ser-31, Ser-106 and Ser-158 inhibits interaction with HDAC6, resulting in decreased acetylation of tubulin, increased cell motility and entry into S-phase. Phosphorylation by CDK1 inhibits the microtubule polymerizing activity. In terms of processing, degraded by the proteasome; zinc-binding inhibits degradation by the proteasome. Widely expressed with higher expression in brain (at protein level).

The protein localises to the golgi outpost. Its subcellular location is the cytoplasm. It is found in the cytoskeleton. The protein resides in the microtubule organizing center. It localises to the nucleus. The protein localises to the spindle. It carries out the reaction GTP + H2O = GDP + phosphate + H(+). In terms of biological role, regulator of microtubule dynamics that plays a key role in myelination by promoting elongation of the myelin sheath. Acts as a microtubule nucleation factor in oligodendrocytes: specifically localizes to the postsynaptic Golgi apparatus region, also named Golgi outpost, and promotes microtubule nucleation, an important step for elongation of the myelin sheath. Required for both uniform polarized growth of distal microtubules as well as directing the branching of proximal processes. Shows magnesium-dependent GTPase activity; the role of the GTPase activity is unclear. In addition to microtubule nucleation activity, also involved in microtubule bundling and stabilization of existing microtubules, thereby maintaining the integrity of the microtubule network. Regulates microtubule dynamics by promoting tubulin acetylation: acts by inhibiting the tubulin deacetylase activity of HDAC6. Also regulates cell migration: phosphorylation by ROCK1 inhibits interaction with HDAC6, resulting in decreased acetylation of tubulin and increased cell motility. Plays a role in cell proliferation by regulating the G1/S-phase transition. Involved in astral microtubule organization and mitotic spindle orientation during early stage of mitosis; this process is regulated by phosphorylation by LIMK2. This Mus musculus (Mouse) protein is Tubulin polymerization-promoting protein.